Consider the following 592-residue polypeptide: Outer spore wall assembly protein SHE10 (592 aa).

Residues 1-23 (MRFFKRFLLTLTVFIYTLRYLHC) form the signal peptide. 2 coiled-coil regions span residues 354-385 (ENNI…LYEE) and 448-583 (LNQF…KQMG). Positions 507–580 (QSEQEERIKS…EVRKQEEARK (74 aa)) are enriched in basic and acidic residues. A disordered region spans residues 507 to 592 (QSEQEERIKS…GSPPPPQQQQ (86 aa)).

The protein belongs to the SHE10 family. As to quaternary structure, component of the mitochondria-localized RNase mitochondrial RNA-processing (RNase MRP) composed of one single RNA encoded by the NME1 gene and at least 31 proteins. Absent in the nucleus-localized RNase MRP (NuMRP).

The protein localises to the mitochondrion. Functionally, involved in spore wall assembly. May be a component of the mitochondrial RNase MRP (MtMRP), a ribonucleoprotein endoribonuclease involved in the cleaving RNA transcripts to generate primers for DNA replication in mitochondria. The polypeptide is Outer spore wall assembly protein SHE10 (Vanderwaltozyma polyspora (strain ATCC 22028 / DSM 70294 / BCRC 21397 / CBS 2163 / NBRC 10782 / NRRL Y-8283 / UCD 57-17) (Kluyveromyces polysporus)).